A 246-amino-acid polypeptide reads, in one-letter code: Small ribosomal subunit protein uS2 (246 aa).

It belongs to the universal ribosomal protein uS2 family.

This is Small ribosomal subunit protein uS2 from Burkholderia vietnamiensis (strain G4 / LMG 22486) (Burkholderia cepacia (strain R1808)).